We begin with the raw amino-acid sequence, 201 residues long: Recombination protein RecR (201 aa).

The segment at 60–75 (CRSCGNVDTSDPCTIC) adopts a C4-type zinc-finger fold. One can recognise a Toprim domain in the interval 83-178 (TTLVVVEDVS…TVTRLAHGVP (96 aa)).

The protein belongs to the RecR family.

Functionally, may play a role in DNA repair. It seems to be involved in an RecBC-independent recombinational process of DNA repair. It may act with RecF and RecO. This chain is Recombination protein RecR, found in Methylorubrum extorquens (strain CM4 / NCIMB 13688) (Methylobacterium extorquens).